Reading from the N-terminus, the 169-residue chain is Large ribosomal subunit protein uL5 (169 aa).

The protein belongs to the universal ribosomal protein uL5 family. In terms of assembly, part of the 50S ribosomal subunit; contacts the 5S rRNA and probably tRNA. Forms a bridge to the 30S subunit in the 70S ribosome.

Its function is as follows. This is one of the proteins that bind and probably mediate the attachment of the 5S RNA into the large ribosomal subunit, where it forms part of the central protuberance. In the 70S ribosome it contacts protein S13 of the 30S subunit (bridge B1b), connecting the 2 subunits; this bridge is implicated in subunit movement. May contact the P site tRNA; the 5S rRNA and some of its associated proteins might help stabilize positioning of ribosome-bound tRNAs. The chain is Large ribosomal subunit protein uL5 from Methanococcoides burtonii (strain DSM 6242 / NBRC 107633 / OCM 468 / ACE-M).